Here is a 1090-residue protein sequence, read N- to C-terminus: Leucine-rich repeat receptor-like serine/threonine-protein kinase RGI4 (1090 aa).

A signal peptide spans 1–20; that stretch reads MPRNPRFCFFLFLLFHSSLF. Over 21–702 the chain is Extracellular; the sequence is FSIPCFSIDE…IQTRHRSAVK (682 aa). An LRR 1 repeat occupies 36–59; it reads LSWKSQLNISGDALSSWKASESNP. A glycan (N-linked (GlcNAc...) asparagine) is linked at N43. The cysteines at positions 60 and 67 are disulfide-linked. 4 LRR repeats span residues 95–119, 120–143, 145–166, and 168–191; these read IKSL…LGDL, SELE…IFKL, KLKI…ELGN, and VNLI…IGEL. The N-linked (GlcNAc...) asparagine glycan is linked to N107. Short sequence motifs (small peptide recognition) lie at residues 176 to 177, 198 to 201, 221 to 226, and Y249; these read FD, RAGG, and TLGLAE. LRR repeat units follow at residues 216-240, 242-264, 265-288, 289-312, 314-335, 336-360, and 362-386; these read CESL…IGNL, KVQT…IGNC, TELQ…MGRL, KKLQ…LGTC, ELFL…SFGN, LPNL…LANC, and KLTH…KLTS. Residue N263 is glycosylated (N-linked (GlcNAc...) asparagine). The CLE45 peptide binding signature appears at 269–273; that stretch reads NLYLY. A Small peptide recognition motif is present at residues 271-273; sequence YLY. 2 short sequence motifs (small peptide recognition) span residues 319-322 and 341-343; these read DLSE and ELQ. The N-linked (GlcNAc...) asparagine glycan is linked to N359. 2 consecutive short sequence motifs (small peptide recognition) follow at residues 389-393 and 415-418; these read MFFAW and DLSY. 11 LRR repeats span residues 408–432, 434–456, 457–480, 481–504, 506–526, 527–550, 551–574, 576–598, 600–622, 623–646, and 647–670; these read CQEL…IFEI, NLTK…IGNC, TNLY…IGNL, KNLN…ISGC, SLEF…GTLP, KSLQ…IGSL, TELT…ISSC, SLQL…LGRI, SLAI…RFSS, LTNL…LADL, and QNLV…LFFR. N420 and N434 each carry an N-linked (GlcNAc...) asparagine glycan. Residues 437 to 441 carry the Small peptide recognition motif; sequence KLLLL. An N-linked (GlcNAc...) asparagine glycan is attached at N455. The Small peptide recognition signature appears at 461–463; sequence RLR. N-linked (GlcNAc...) asparagine glycosylation occurs at N606. The N-linked (GlcNAc...) asparagine glycan is linked to N653. Residues 703–723 traverse the membrane as a helical segment; that stretch reads VTMSILVAASVVLVLMAVYTL. The Cytoplasmic segment spans residues 724-1090; the sequence is VKAQRITGKQ…CSFAYSDESV (367 aa). Residues 758–1040 enclose the Protein kinase domain; that stretch reads LTSANVIGTG…KDIVAMLKEI (283 aa). ATP is bound by residues 764–772 and K786; that span reads IGTGSSGVV. A phosphotyrosine mark is found at Y829 and Y869. The Proton acceptor role is filled by D882. A Phosphotyrosine modification is found at Y932. The stretch at 1037–1060 is one LRR 24 repeat; that stretch reads LKEIRQFDMDRSESDMIKGGKCEK. The interval 1054-1079 is disordered; it reads KGGKCEKWQPQPLPPEKIVSTPRGSS.

This sequence belongs to the protein kinase superfamily. Ser/Thr protein kinase family. In terms of assembly, self-interacts. Interacts with RGF1; this interaction triggers its phosphorylation and ubiquitination and the formation of heterodimers with SERK1. In terms of processing, autophosphorylated. Post-translationally, phosphorylated and ubiquitinated upon interaction with RGF1, thus leading to activation a subsequent degradation. As to expression, expressed in floers, pollen grains and stipules. Present in roots.

The protein localises to the cell membrane. It catalyses the reaction L-seryl-[protein] + ATP = O-phospho-L-seryl-[protein] + ADP + H(+). The catalysed reaction is L-threonyl-[protein] + ATP = O-phospho-L-threonyl-[protein] + ADP + H(+). Functionally, receptor with a serine/threonine-protein kinase activity. Together with SKM1, LRR-rich receptor-like kinase (LRR-RLK) required for male fertility by the perception of CLE43 and CLE45 peptides and the transduction of their promoting action in pollen tubes, especially under relatively high temperature (at 30 degrees Celsius), thus conferring tolerance against high temperature probably through the maintenance of mitochondrial activity. Seems to not be involved in the perception of CLE45 peptide in roots. Together with RGI1, RGI2, RGI3, RGI4 and RGI5, acts as receptor of RGF1, a peptide hormone that maintains the postembryonic root stem cell niche by regulating the expression levels and patterns of the transcription factor PLETHORA (PLT). Links RGF1 signal with its downstream components. In Arabidopsis thaliana (Mouse-ear cress), this protein is Leucine-rich repeat receptor-like serine/threonine-protein kinase RGI4.